A 1055-amino-acid chain; its full sequence is RapA guanosine triphosphatase-activating protein 1 (1055 aa).

6 disordered regions span residues 76–100 (LSPQ…EEER), 256–292 (NHQP…SSLT), 418–525 (QQLL…FLGV), 544–570 (THAT…SPPL), 603–629 (TTQL…PPSE), and 943–969 (NNNS…NLPT). Over residues 89 to 100 (QHEKITPEEEER) the composition is skewed to basic and acidic residues. Composition is skewed to low complexity over residues 262–292 (STPR…SSLT), 442–455 (DFNL…NNNN), and 469–482 (TTTT…NNNN). Positions 483–494 (ISPQHSGTSGSP) are enriched in polar residues. Composition is skewed to low complexity over residues 603-622 (TTQL…TSQP) and 943-966 (NNNS…SDSN). A Rap-GAP domain is found at 779–1048 (LIQFEAKNIH…RTRKEFLHSF (270 aa)).

Its subcellular location is the cytoplasm. It localises to the cell cortex. Functionally, mediates the deactivation of rap1 and plays an important role in spatially and temporally regulating cell adhesion and chemotaxis by controlling attachment disassembly in the leading edge through the regulation of myosin II assembly and disassembly. Overexpression leads to defective chemotaxis. The polypeptide is RapA guanosine triphosphatase-activating protein 1 (rapgap1) (Dictyostelium discoideum (Social amoeba)).